The primary structure comprises 501 residues: L-arabinose isomerase (501 aa).

Positions 307, 334, 351, and 450 each coordinate Mn(2+).

The protein belongs to the arabinose isomerase family. Requires Mn(2+) as cofactor.

It carries out the reaction beta-L-arabinopyranose = L-ribulose. Its pathway is carbohydrate degradation; L-arabinose degradation via L-ribulose; D-xylulose 5-phosphate from L-arabinose (bacterial route): step 1/3. Functionally, catalyzes the conversion of L-arabinose to L-ribulose. The polypeptide is L-arabinose isomerase (Acidothermus cellulolyticus (strain ATCC 43068 / DSM 8971 / 11B)).